We begin with the raw amino-acid sequence, 349 residues long: 3'-5' exoribonuclease 1 (349 aa).

Basic and acidic residues-rich tracts occupy residues 1-10 and 22-35; these read MEDPQSKEPA and PRPE…RPSP. The interval 1 to 48 is disordered; that stretch reads MEDPQSKEPAGEAVALALLESPRPEGGEEPPRPSPEETQQCKFDGQET. Phosphoserine occurs at positions 59 and 62. Positions 76 to 110 constitute an SAP domain; it reads INRMSKEELRAKLSEFKLETRGVKDVLKKRLKNYY. The Exonuclease domain occupies 130 to 306; the sequence is ICIIDFEATC…DDSKNIARIA (177 aa). 2 residues coordinate Mg(2+): D134 and E136. The active-site Proton acceptor is E136. E136 and A137 together coordinate AMP. D234 contacts Mg(2+). H293 functions as the Proton acceptor in the catalytic mechanism. H293 provides a ligand contact to AMP. A Mg(2+)-binding site is contributed by D298.

Identified in a histone pre-mRNA complex, at least composed of ERI1, LSM11, SLBP, SNRPB, SYNCRIP and YBX1. Interacts in a cooperative manner with SLBP to the mature 3'-end of histone mRNAs. Binds to 40S and 60S ribosomal subunits and to 80S assembled ribosomes. Found in a ternary complex with SLBP and the stem-loop structure of the 3'-end of histone mRNAs. The cofactor is Mg(2+).

The protein localises to the cytoplasm. The protein resides in the nucleus. It is found in the nucleolus. The catalysed reaction is Exonucleolytic cleavage in the 3'- to 5'-direction to yield nucleoside 5'-phosphates.. With respect to regulation, although it can bind simultaneously with SLBP to the 3'-end of histone mRNA, the presence of SLBP prevents the exonuclease activity. RNA exonuclease that binds to the 3'-end of histone mRNAs and degrades them, suggesting that it plays an essential role in histone mRNA decay after replication. A 2' and 3'-hydroxyl groups at the last nucleotide of the histone 3'-end is required for efficient 3'-end histone mRNA exonuclease activity and degradation of RNA substrates. Also able to degrade the 3'-overhangs of short interfering RNAs (siRNAs) in vitro, suggesting a possible role as regulator of RNA interference (RNAi). Required for binding the 5'-ACCCA-3' sequence present in stem-loop structure. Able to bind other mRNAs. Required for 5.8S rRNA 3'-end processing. Also binds to 5.8s ribosomal RNA. Binds with high affinity to the stem-loop structure of replication-dependent histone pre-mRNAs. In vitro, does not have sequence specificity. In vitro, has weak DNA exonuclease activity. In vitro, shows biphasic kinetics such that there is rapid hydrolysis of the last three unpaired RNA nucleotides in the 39 flanking sequence followed by a much slower cleavage through the stem that occurs over a longer incubation period in the order of hours. ERI1-mediated RNA metabolism plays a key role in chondrogenesis. This chain is 3'-5' exoribonuclease 1, found in Homo sapiens (Human).